The chain runs to 280 residues: Pantothenate synthetase (280 aa).

Position 30–37 (30–37 (MGYLHEGH)) interacts with ATP. Residue histidine 37 is the Proton donor of the active site. Glutamine 61 is a (R)-pantoate binding site. Beta-alanine is bound at residue glutamine 61. 147–150 (GQKD) contacts ATP. Glutamine 153 is a binding site for (R)-pantoate. Residues valine 176 and 184 to 187 (MSSR) contribute to the ATP site.

Belongs to the pantothenate synthetase family. As to quaternary structure, homodimer.

Its subcellular location is the cytoplasm. It catalyses the reaction (R)-pantoate + beta-alanine + ATP = (R)-pantothenate + AMP + diphosphate + H(+). The protein operates within cofactor biosynthesis; (R)-pantothenate biosynthesis; (R)-pantothenate from (R)-pantoate and beta-alanine: step 1/1. Catalyzes the condensation of pantoate with beta-alanine in an ATP-dependent reaction via a pantoyl-adenylate intermediate. The polypeptide is Pantothenate synthetase (Thermotoga neapolitana).